A 572-amino-acid polypeptide reads, in one-letter code: Glypican-5 (572 aa).

An N-terminal signal peptide occupies residues 1-24 (MDARTWRLGWRCLLLLALLGSTRS). N-linked (GlcNAc...) asparagine glycosylation is found at Asn120 and Asn237. The O-linked (Xyl...) (glycosaminoglycan) serine glycan is linked to Ser486. Asn493 is a glycosylation site (N-linked (GlcNAc...) asparagine). O-linked (Xyl...) (glycosaminoglycan) serine glycosylation is found at Ser495, Ser507, and Ser509. Residue Asn527 is glycosylated (N-linked (GlcNAc...) asparagine).

The protein belongs to the glypican family.

The protein resides in the cell membrane. The protein localises to the secreted. It localises to the extracellular space. In terms of biological role, cell surface proteoglycan that bears heparan sulfate. The sequence is that of Glypican-5 (Gpc5) from Mus musculus (Mouse).